Reading from the N-terminus, the 438-residue chain is 3-phosphoshikimate 1-carboxyvinyltransferase 1 (438 aa).

3-phosphoshikimate is bound by residues lysine 30, serine 31, and arginine 35. Lysine 30 lines the phosphoenolpyruvate pocket. Glycine 104 and arginine 132 together coordinate phosphoenolpyruvate. 3-phosphoshikimate is bound by residues serine 178, serine 179, glutamine 180, serine 207, glutamate 326, and histidine 353. Glutamine 180 is a phosphoenolpyruvate binding site. Glutamate 326 (proton acceptor) is an active-site residue. 3 residues coordinate phosphoenolpyruvate: arginine 357, arginine 398, and lysine 423.

It belongs to the EPSP synthase family. In terms of assembly, monomer.

The protein resides in the cytoplasm. The enzyme catalyses 3-phosphoshikimate + phosphoenolpyruvate = 5-O-(1-carboxyvinyl)-3-phosphoshikimate + phosphate. It functions in the pathway metabolic intermediate biosynthesis; chorismate biosynthesis; chorismate from D-erythrose 4-phosphate and phosphoenolpyruvate: step 6/7. In terms of biological role, catalyzes the transfer of the enolpyruvyl moiety of phosphoenolpyruvate (PEP) to the 5-hydroxyl of shikimate-3-phosphate (S3P) to produce enolpyruvyl shikimate-3-phosphate and inorganic phosphate. In Streptomyces coelicolor (strain ATCC BAA-471 / A3(2) / M145), this protein is 3-phosphoshikimate 1-carboxyvinyltransferase 1.